The primary structure comprises 278 residues: MKI67 FHA domain-interacting nucleolar phosphoprotein-like (278 aa).

An RRM domain is found at 41-119 (GVIYIGHIPK…RLLKCEFVTP (79 aa)).

The protein resides in the nucleus. Its subcellular location is the nucleolus. The chain is MKI67 FHA domain-interacting nucleolar phosphoprotein-like (nifk) from Xenopus laevis (African clawed frog).